The following is a 146-amino-acid chain: Putative pre-16S rRNA nuclease (146 aa).

It belongs to the YqgF nuclease family.

Its subcellular location is the cytoplasm. Its function is as follows. Could be a nuclease involved in processing of the 5'-end of pre-16S rRNA. This is Putative pre-16S rRNA nuclease from Pseudomonas syringae pv. tomato (strain ATCC BAA-871 / DC3000).